Here is a 214-residue protein sequence, read N- to C-terminus: MKIVIADDHHVVRKGLRFFFATQDDIEVVGEAATGLEALRVIEETKPDLVLMDLSMPEMDGIQAIKKAIQQFPDTNIIVLTSYSDQEHVIPALQAGAKAYQLKDTEPEELVKTRQVHGGEYKLSTAIMPHVLTHMKNQHDPEKEKYYQLTRREKDVLTEIANGKSNKEIAAALFISEKTVKTHVSNLLAKLEVADRTQAALFAVKYNLNGEISK.

Positions 2 to 118 constitute a Response regulatory domain; sequence KIVIADDHHV…ELVKTRQVHG (117 aa). Asp53 bears the 4-aspartylphosphate mark. The region spanning 142–207 is the HTH luxR-type domain; that stretch reads EKEKYYQLTR…QAALFAVKYN (66 aa). Residues 166–185 constitute a DNA-binding region (H-T-H motif); the sequence is NKEIAAALFISEKTVKTHVS.

In terms of processing, phosphorylated by YhcY.

The protein localises to the cytoplasm. Its function is as follows. Member of the two-component regulatory system YhcY/YhcZ. This is an uncharacterized protein from Bacillus subtilis (strain 168).